The following is a 491-amino-acid chain: Lysine--tRNA ligase (491 aa).

Residues Glu400 and Glu407 each contribute to the Mg(2+) site.

Belongs to the class-II aminoacyl-tRNA synthetase family. In terms of assembly, homodimer. The cofactor is Mg(2+).

It is found in the cytoplasm. It carries out the reaction tRNA(Lys) + L-lysine + ATP = L-lysyl-tRNA(Lys) + AMP + diphosphate. The sequence is that of Lysine--tRNA ligase from Mesomycoplasma hyopneumoniae (strain J / ATCC 25934 / NCTC 10110) (Mycoplasma hyopneumoniae).